The following is a 202-amino-acid chain: LexA repressor 1 (202 aa).

A DNA-binding region (H-T-H motif) is located at residues 28 to 48 (RAEIAQELGFKSPNAAEEHLK). Residues serine 123 and lysine 160 each act as for autocatalytic cleavage activity in the active site.

It belongs to the peptidase S24 family. In terms of assembly, homodimer.

It catalyses the reaction Hydrolysis of Ala-|-Gly bond in repressor LexA.. Its function is as follows. Represses a number of genes involved in the response to DNA damage (SOS response), including recA and lexA. In the presence of single-stranded DNA, RecA interacts with LexA causing an autocatalytic cleavage which disrupts the DNA-binding part of LexA, leading to derepression of the SOS regulon and eventually DNA repair. The polypeptide is LexA repressor 1 (Pseudomonas syringae pv. tomato (strain ATCC BAA-871 / DC3000)).